The sequence spans 410 residues: Enterobactin exporter EntS (410 aa).

Over 1–21 (MNKQSWLLNLSLLKTHPAFRA) the chain is Cytoplasmic. A helical membrane pass occupies residues 22-42 (VFLARFISIVSLGLLGVAVPV). Topologically, residues 43-55 (QIQMMTHSTWQVG) are periplasmic. A helical membrane pass occupies residues 56 to 76 (LSVTLTGGAMFVGLMVGGVLA). Topologically, residues 77 to 83 (DRYERKK) are cytoplasmic. The helical transmembrane segment at 84 to 104 (VILLARGTCGIGFIGLCLNAL) threads the bilayer. At 105-109 (LPEPS) the chain is on the periplasmic side. Residues 110-130 (LLAIYLLGLWDGFFASLGVTA) traverse the membrane as a helical segment. Over 131–156 (LLAATSALVGRENLMQAGAITMLTVR) the chain is Cytoplasmic. A helical transmembrane segment spans residues 157–177 (LGSVISPMIGGLLLATGGVAW). Residue Asn-178 is a topological domain, periplasmic. A helical membrane pass occupies residues 179-199 (YGLAAAGTFITLLPLLSLPEL). The Cytoplasmic portion of the chain corresponds to 200-218 (PPPPQPLEHPLKSLLAGFR). The helical transmembrane segment at 219–233 (FLLASPLLGGLLTMA) threads the bilayer. Topologically, residues 234-250 (SAVLVLYPALADNWQMS) are periplasmic. Residues 251–271 (AAQIGFLYAAIPLGAAIGALT) form a helical membrane-spanning segment. Over 272–281 (SGKLAHSARP) the chain is Cytoplasmic. The helical transmembrane segment at 282 to 301 (GLLMLLSTLGSFLAIGLFGL) threads the bilayer. Topologically, residues 302–307 (MPMWIL) are periplasmic. Residues 308–330 (GVVCLALFGWLSAVSSLLQYTML) form a helical membrane-spanning segment. At 331 to 350 (QTQTPEAMLGRINGLWTAQN) the chain is on the cytoplasmic side. The chain crosses the membrane as a helical span at residues 351–371 (VTGDAIGAALLGGLGAMMTPV). Residue Ala-372 is a topological domain, periplasmic. The helical transmembrane segment at 373–393 (SASASGFGLLIIGVLLLLVLV) threads the bilayer. The Cytoplasmic segment spans residues 394-410 (ELRRFRQTPPQVTASDS).

It belongs to the major facilitator superfamily. EntS (TC 2.A.1.38) family.

Its subcellular location is the cell inner membrane. Functionally, component of an export pathway for enterobactin. This Shigella flexneri protein is Enterobactin exporter EntS.